Here is a 474-residue protein sequence, read N- to C-terminus: Aromatic amino acid aminotransferase C56E4.03 (474 aa).

The protein belongs to the class-I pyridoxal-phosphate-dependent aminotransferase family. Requires pyridoxal 5'-phosphate as cofactor.

The protein resides in the cytoplasm. It catalyses the reaction an aromatic L-alpha-amino acid + 2-oxoglutarate = an aromatic oxo-acid + L-glutamate. Functionally, has aromatic amino acid transaminase activity. The chain is Aromatic amino acid aminotransferase C56E4.03 from Schizosaccharomyces pombe (strain 972 / ATCC 24843) (Fission yeast).